Reading from the N-terminus, the 102-residue chain is Small ribosomal subunit protein uS10 (102 aa).

Belongs to the universal ribosomal protein uS10 family. Part of the 30S ribosomal subunit.

Functionally, involved in the binding of tRNA to the ribosomes. This chain is Small ribosomal subunit protein uS10, found in Geotalea daltonii (strain DSM 22248 / JCM 15807 / FRC-32) (Geobacter daltonii).